Reading from the N-terminus, the 615-residue chain is Forkhead box protein O (615 aa).

Disordered regions lie at residues 39-77 (RARSNTWPCPRPENFVEPTDELDSTKASNQQLAPGDSQQ), 182-205 (KSVRRRAASMETSRYEKRRGRAKK), 217-269 (GLND…RLSP), 318-359 (FSAA…APGY), and 389-409 (NSVTTTMSPAYPNSEPSSDSL). Thr44 bears the Phosphothreonine; by PKB/AKT1 mark. The span at 63–77 (TKASNQQLAPGDSQQ) shows a compositional bias: polar residues. Ser75 carries the post-translational modification Phosphoserine. Residues 95 to 201 (WGNLSYADLI…ETSRYEKRRG (107 aa)) constitute a DNA-binding region (fork-head). Ser190 is modified (phosphoserine; by PKB/AKT1). 2 stretches are compositionally biased toward polar residues: residues 221-230 (ATPSPSSSVS) and 256-265 (RASSNASSCG). At Ser259 the chain carries Phosphoserine; by PKB/AKT1. Phosphoserine is present on residues Ser262, Ser263, and Ser268. Residues 326-335 (SQPPPPPYQP) are compositionally biased toward pro residues. Over residues 336–351 (PQHQQAQQQQQQSPYA) the composition is skewed to low complexity.

Interacts with melt.

The protein resides in the cytoplasm. It is found in the nucleus. In terms of biological role, transcription factor involved in the regulation of the insulin signaling pathway. Consistently activates both the downstream target Thor\d4EBP and the feedback control target InR. Involved in negative regulation of the cell cycle, modulating cell growth and proliferation. In response to cellular stresses, such as nutrient deprivation or increased levels of reactive oxygen species, foxo is activated and inhibits growth through the action of target genes such as Thor. Foxo activated in the adult fat body can regulate lifespan in adults; an insulin peptide itself may function as one secondary messenger of insulin-regulated aging. Also regulates Lip4, homolog of human acid lipases, thereby acting as a key modulator of lipid metabolism by insulin signaling and integrates insulin responses to glucose and lipid homeostasis. This is Forkhead box protein O from Drosophila erecta (Fruit fly).